A 461-amino-acid polypeptide reads, in one-letter code: Phosphomethylpyrimidine synthase (461 aa).

Substrate contacts are provided by residues Asn80, Met109, Tyr139, His175, Ser195–Gly197, Asp236–Arg239, and Glu275. Residue His279 coordinates Zn(2+). Residue Tyr302 participates in substrate binding. A Zn(2+)-binding site is contributed by His343. [4Fe-4S] cluster-binding residues include Cys423, Cys426, and Cys431.

The protein belongs to the ThiC family. It depends on [4Fe-4S] cluster as a cofactor.

It carries out the reaction 5-amino-1-(5-phospho-beta-D-ribosyl)imidazole + S-adenosyl-L-methionine = 4-amino-2-methyl-5-(phosphooxymethyl)pyrimidine + CO + 5'-deoxyadenosine + formate + L-methionine + 3 H(+). The protein operates within cofactor biosynthesis; thiamine diphosphate biosynthesis. Catalyzes the synthesis of the hydroxymethylpyrimidine phosphate (HMP-P) moiety of thiamine from aminoimidazole ribotide (AIR) in a radical S-adenosyl-L-methionine (SAM)-dependent reaction. In Picosynechococcus sp. (strain ATCC 27264 / PCC 7002 / PR-6) (Agmenellum quadruplicatum), this protein is Phosphomethylpyrimidine synthase.